The sequence spans 255 residues: 3-deoxy-manno-octulosonate cytidylyltransferase (255 aa).

The protein belongs to the KdsB family.

The protein resides in the cytoplasm. It catalyses the reaction 3-deoxy-alpha-D-manno-oct-2-ulosonate + CTP = CMP-3-deoxy-beta-D-manno-octulosonate + diphosphate. It functions in the pathway nucleotide-sugar biosynthesis; CMP-3-deoxy-D-manno-octulosonate biosynthesis; CMP-3-deoxy-D-manno-octulosonate from 3-deoxy-D-manno-octulosonate and CTP: step 1/1. Its pathway is bacterial outer membrane biogenesis; lipopolysaccharide biosynthesis. In terms of biological role, activates KDO (a required 8-carbon sugar) for incorporation into bacterial lipopolysaccharide in Gram-negative bacteria. The sequence is that of 3-deoxy-manno-octulosonate cytidylyltransferase from Glaesserella parasuis serovar 5 (strain SH0165) (Haemophilus parasuis).